The following is a 410-amino-acid chain: Proteasome-activating nucleotidase (410 aa).

The stretch at 1-70 forms a coiled coil; it reads MENNSQNVLK…LRGEIERFRT (70 aa). ATP is bound by residues 195–200 and H334; that span reads GTGKTL. Positions 408–410 are docks into pockets in the proteasome alpha-ring to cause gate opening; it reads MFG.

The protein belongs to the AAA ATPase family. As to quaternary structure, homohexamer. The hexameric complex has a two-ring architecture resembling a top hat that caps the 20S proteasome core at one or both ends. Upon ATP-binding, the C-terminus of PAN interacts with the alpha-rings of the proteasome core by binding to the intersubunit pockets.

The protein resides in the cytoplasm. Functionally, ATPase which is responsible for recognizing, binding, unfolding and translocation of substrate proteins into the archaeal 20S proteasome core particle. Is essential for opening the gate of the 20S proteasome via an interaction with its C-terminus, thereby allowing substrate entry and access to the site of proteolysis. Thus, the C-termini of the proteasomal ATPase function like a 'key in a lock' to induce gate opening and therefore regulate proteolysis. Unfolding activity requires energy from ATP hydrolysis, whereas ATP binding alone promotes ATPase-20S proteasome association which triggers gate opening, and supports translocation of unfolded substrates. This is Proteasome-activating nucleotidase from Methanothermobacter thermautotrophicus (strain ATCC 29096 / DSM 1053 / JCM 10044 / NBRC 100330 / Delta H) (Methanobacterium thermoautotrophicum).